Reading from the N-terminus, the 288-residue chain is Lipoyl synthase (288 aa).

[4Fe-4S] cluster contacts are provided by cysteine 42, cysteine 47, cysteine 53, cysteine 68, cysteine 72, cysteine 75, and serine 280. One can recognise a Radical SAM core domain in the interval 54–269 (WGEGTATFMI…EKYGIELGFR (216 aa)).

Belongs to the radical SAM superfamily. Lipoyl synthase family. [4Fe-4S] cluster is required as a cofactor.

It is found in the cytoplasm. It catalyses the reaction [[Fe-S] cluster scaffold protein carrying a second [4Fe-4S](2+) cluster] + N(6)-octanoyl-L-lysyl-[protein] + 2 oxidized [2Fe-2S]-[ferredoxin] + 2 S-adenosyl-L-methionine + 4 H(+) = [[Fe-S] cluster scaffold protein] + N(6)-[(R)-dihydrolipoyl]-L-lysyl-[protein] + 4 Fe(3+) + 2 hydrogen sulfide + 2 5'-deoxyadenosine + 2 L-methionine + 2 reduced [2Fe-2S]-[ferredoxin]. It participates in protein modification; protein lipoylation via endogenous pathway; protein N(6)-(lipoyl)lysine from octanoyl-[acyl-carrier-protein]: step 2/2. Its function is as follows. Catalyzes the radical-mediated insertion of two sulfur atoms into the C-6 and C-8 positions of the octanoyl moiety bound to the lipoyl domains of lipoate-dependent enzymes, thereby converting the octanoylated domains into lipoylated derivatives. The protein is Lipoyl synthase of Flavobacterium johnsoniae (strain ATCC 17061 / DSM 2064 / JCM 8514 / BCRC 14874 / CCUG 350202 / NBRC 14942 / NCIMB 11054 / UW101) (Cytophaga johnsonae).